We begin with the raw amino-acid sequence, 412 residues long: L-cysteine:1D-myo-inositol 2-amino-2-deoxy-alpha-D-glucopyranoside ligase (412 aa).

Cys43 contributes to the Zn(2+) binding site. Residues 43–46, Thr58, and 81–83 contribute to the L-cysteinyl-5'-AMP site; these read CGIT and NVT. Positions 45–55 match the 'HIGH' region motif; that stretch reads ITPYDATHLGH. The 'ERGGDP' region motif lies at 187–192; it reads ERGGDP. Trp227 contacts L-cysteinyl-5'-AMP. Cys231 is a binding site for Zn(2+). 249 to 251 is a binding site for L-cysteinyl-5'-AMP; sequence GSD. A Zn(2+)-binding site is contributed by His256. Ile283 provides a ligand contact to L-cysteinyl-5'-AMP. The short motif at 289-293 is the 'KMSKS' region element; it reads KMSKS.

This sequence belongs to the class-I aminoacyl-tRNA synthetase family. MshC subfamily. As to quaternary structure, monomer. The cofactor is Zn(2+).

It catalyses the reaction 1D-myo-inositol 2-amino-2-deoxy-alpha-D-glucopyranoside + L-cysteine + ATP = 1D-myo-inositol 2-(L-cysteinylamino)-2-deoxy-alpha-D-glucopyranoside + AMP + diphosphate + H(+). Its function is as follows. Catalyzes the ATP-dependent condensation of GlcN-Ins and L-cysteine to form L-Cys-GlcN-Ins. This chain is L-cysteine:1D-myo-inositol 2-amino-2-deoxy-alpha-D-glucopyranoside ligase (mshC), found in Mycolicibacterium smegmatis (strain ATCC 700084 / mc(2)155) (Mycobacterium smegmatis).